Here is a 126-residue protein sequence, read N- to C-terminus: Ribosome-binding factor A (126 aa).

Belongs to the RbfA family. As to quaternary structure, monomer. Binds 30S ribosomal subunits, but not 50S ribosomal subunits or 70S ribosomes.

The protein localises to the cytoplasm. One of several proteins that assist in the late maturation steps of the functional core of the 30S ribosomal subunit. Associates with free 30S ribosomal subunits (but not with 30S subunits that are part of 70S ribosomes or polysomes). Required for efficient processing of 16S rRNA. May interact with the 5'-terminal helix region of 16S rRNA. The chain is Ribosome-binding factor A from Haemophilus ducreyi (strain 35000HP / ATCC 700724).